A 218-amino-acid polypeptide reads, in one-letter code: Pyridoxine/pyridoxamine 5'-phosphate oxidase (218 aa).

Residues 66 to 71 (RVVLLK), Arg-87, Lys-88, and Gln-110 contribute to the FMN site. Lys-71 is a substrate binding site. Residues Tyr-128, Arg-132, and Ser-136 each contribute to the substrate site. FMN is bound by residues 145–146 (QS) and Trp-190. 196 to 198 (RLH) provides a ligand contact to substrate. FMN is bound at residue Arg-200.

Belongs to the pyridoxamine 5'-phosphate oxidase family. As to quaternary structure, homodimer. FMN serves as cofactor.

It carries out the reaction pyridoxamine 5'-phosphate + O2 + H2O = pyridoxal 5'-phosphate + H2O2 + NH4(+). The enzyme catalyses pyridoxine 5'-phosphate + O2 = pyridoxal 5'-phosphate + H2O2. It participates in cofactor metabolism; pyridoxal 5'-phosphate salvage; pyridoxal 5'-phosphate from pyridoxamine 5'-phosphate: step 1/1. The protein operates within cofactor metabolism; pyridoxal 5'-phosphate salvage; pyridoxal 5'-phosphate from pyridoxine 5'-phosphate: step 1/1. In terms of biological role, catalyzes the oxidation of either pyridoxine 5'-phosphate (PNP) or pyridoxamine 5'-phosphate (PMP) into pyridoxal 5'-phosphate (PLP). This chain is Pyridoxine/pyridoxamine 5'-phosphate oxidase, found in Anaplasma marginale (strain St. Maries).